A 41-amino-acid chain; its full sequence is Large ribosomal subunit protein bL36 (41 aa).

The protein belongs to the bacterial ribosomal protein bL36 family.

The sequence is that of Large ribosomal subunit protein bL36 from Edwardsiella ictaluri (strain 93-146).